We begin with the raw amino-acid sequence, 276 residues long: Shikimate dehydrogenase (NADP(+)) (276 aa).

Residues Ser15–Ser17 and Thr62 contribute to the shikimate site. The active-site Proton acceptor is the Lys66. Positions 87 and 103 each coordinate shikimate. NADP(+) is bound by residues Gly127–Ala131, Asn151–Lys156, and Met215. Tyr217 lines the shikimate pocket. Gly239 contacts NADP(+).

This sequence belongs to the shikimate dehydrogenase family. In terms of assembly, homodimer.

It catalyses the reaction shikimate + NADP(+) = 3-dehydroshikimate + NADPH + H(+). The protein operates within metabolic intermediate biosynthesis; chorismate biosynthesis; chorismate from D-erythrose 4-phosphate and phosphoenolpyruvate: step 4/7. Functionally, involved in the biosynthesis of the chorismate, which leads to the biosynthesis of aromatic amino acids. Catalyzes the reversible NADPH linked reduction of 3-dehydroshikimate (DHSA) to yield shikimate (SA). The polypeptide is Shikimate dehydrogenase (NADP(+)) (Cellvibrio japonicus (strain Ueda107) (Pseudomonas fluorescens subsp. cellulosa)).